Reading from the N-terminus, the 369-residue chain is S-(hydroxymethyl)glutathione dehydrogenase (369 aa).

Zn(2+) contacts are provided by Cys40, His62, Cys92, Cys95, Cys98, Cys106, and Cys169.

Belongs to the zinc-containing alcohol dehydrogenase family. Class-III subfamily. In terms of assembly, homodimer. The cofactor is Zn(2+).

Its subcellular location is the cytoplasm. The catalysed reaction is S-(hydroxymethyl)glutathione + NADP(+) = S-formylglutathione + NADPH + H(+). It carries out the reaction S-(hydroxymethyl)glutathione + NAD(+) = S-formylglutathione + NADH + H(+). The enzyme catalyses a primary alcohol + NAD(+) = an aldehyde + NADH + H(+). It catalyses the reaction a secondary alcohol + NAD(+) = a ketone + NADH + H(+). The catalysed reaction is S-nitrosoglutathione + NADH + H(+) = S-(hydroxysulfenamide)glutathione + NAD(+). Has high formaldehyde dehydrogenase activity in the presence of glutathione and catalyzes the oxidation of normal alcohols in a reaction that is not GSH-dependent. In addition, hemithiolacetals other than those formed from GSH, including omega-thiol fatty acids, also are substrates. Also acts as a S-nitroso-glutathione reductase by catalyzing the NADH-dependent reduction of S-nitrosoglutathione. This chain is S-(hydroxymethyl)glutathione dehydrogenase (frmA), found in Escherichia coli (strain ATCC 8739 / DSM 1576 / NBRC 3972 / NCIMB 8545 / WDCM 00012 / Crooks).